Here is a 769-residue protein sequence, read N- to C-terminus: Probable protease Ga0334635_1659 (769 aa).

The tract at residues 118–167 (VARGSSDNNGAPPLSFTLSHGDPKSDPEPSSPSRLVNTGLSEAERPESPL) is disordered.

Functionally, probably a dedicated protease for substrate gasdermin bGSDM; cleaves the bGSDM precursor, releasing the pore-forming moiety, which integrates into the membrane and triggers cell death. Involved in defense against bacteriophages. Expression of gasdermin bGSDM and this neighboring protease is toxic in E.coli. The sequence is that of Probable protease Ga0334635_1659 from Vitiosangium sp. (strain GDMCC 1.1324).